A 227-amino-acid chain; its full sequence is Protein LppM (227 aa).

The signal sequence occupies residues 1-24 (MARTRRRGMLAIAMLLMLVPLATG). Residue cysteine 25 is the site of N-palmitoyl cysteine attachment. A lipid anchor (S-diacylglycerol cysteine) is attached at cysteine 25. An important for bacterial uptake by host macrophages region spans residues 26 to 185 (LRVRASITIS…ARYTDPNTRS (160 aa)). Residues 190–210 (GIWLGIAAFAAAGVVAVLAWI) traverse the membrane as a helical segment.

A shorter form (about 20 kDa) is secreted; upon overexpression of the whole protein in M.smegmatis the C-terminus of the short form is about residue 187, suggesting it is generated by cleavage of the protein before its C-terminal transmembrane domain.

The protein localises to the membrane. Its subcellular location is the secreted. It is found in the cell wall. In terms of biological role, a putative lipoprotein that seems to be specialized for the initial steps of macrophage infection. A non-acylated fragment (residues 26-185) binds phosphatidyl-myo-inositol mannosides (PIMs). Limits, in a TLR2-dependent fashion, bacterial uptake by host (mouse); this effect may be mediated by nonacylated fragment 26-185. Plays a TLR2-dependent role in host phagosome maturation arrest. Plays a TLR2-independent role in chemokine production during the first 24 hours of mouse infection. This chain is Protein LppM (lppM), found in Mycobacterium tuberculosis (strain ATCC 25618 / H37Rv).